The following is an 874-amino-acid chain: Coatomer subunit gamma-1 (874 aa).

Residues methionine 1 to glutamate 11 are compositionally biased toward basic and acidic residues. Residues methionine 1–histidine 21 form a disordered region. HEAT repeat units follow at residues threonine 64–aspartate 101, lysine 283–serine 320, valine 322–serine 355, and serine 356–arginine 392. Threonine 594 carries the post-translational modification Phosphothreonine. Positions arginine 609–glycine 874 are interaction with ZNF289/ARFGAP2.

It belongs to the COPG family. In terms of assembly, oligomeric complex that consists of at least the alpha, beta, beta', gamma, delta, epsilon and zeta subunits. Interacts with ZNF289/ARFGAP2 through its C-terminal appendage domain. Interacts with EGFR upon EGF treatment; interaction is essential for regulation of EGF-dependent nuclear transport of EGFR by retrograde trafficking from the Golgi to the ER. The coatomer interacts with KDEL receptors; the interaction is important for retrograde trafficking of KDEL-bearing proteins from the Golgi to the endoplasmic reticulum. Interacts with COPB1. Interacts with TMED10 (via C-terminus). Interacts with TMED2, TMED3, TMED7 and TMED9.

It is found in the cytoplasm. Its subcellular location is the golgi apparatus membrane. The protein resides in the cytoplasmic vesicle. It localises to the COPI-coated vesicle membrane. In terms of biological role, the coatomer is a cytosolic protein complex that binds to dilysine motifs and reversibly associates with Golgi non-clathrin-coated vesicles, which further mediate biosynthetic protein transport from the ER, via the Golgi up to the trans Golgi network. Coatomer complex is required for budding from Golgi membranes, and is essential for the retrograde Golgi-to-ER transport of dilysine-tagged proteins. In mammals, the coatomer can only be recruited by membranes associated to ADP-ribosylation factors (ARFs), which are small GTP-binding proteins; the complex also influences the Golgi structural integrity, as well as the processing, activity, and endocytic recycling of LDL receptors. Required for limiting lipid storage in lipid droplets. Involved in lipid homeostasis by regulating the presence of perilipin family members PLIN2 and PLIN3 at the lipid droplet surface and promoting the association of adipocyte triglyceride lipase (PNPLA2) with the lipid droplet surface to mediate lipolysis. This Homo sapiens (Human) protein is Coatomer subunit gamma-1 (COPG1).